Consider the following 209-residue polypeptide: Ribosomal RNA large subunit methyltransferase E (209 aa).

5 residues coordinate S-adenosyl-L-methionine: Gly63, Trp65, Asp83, Asp99, and Asp124. The active-site Proton acceptor is Lys164.

Belongs to the class I-like SAM-binding methyltransferase superfamily. RNA methyltransferase RlmE family.

Its subcellular location is the cytoplasm. The catalysed reaction is uridine(2552) in 23S rRNA + S-adenosyl-L-methionine = 2'-O-methyluridine(2552) in 23S rRNA + S-adenosyl-L-homocysteine + H(+). In terms of biological role, specifically methylates the uridine in position 2552 of 23S rRNA at the 2'-O position of the ribose in the fully assembled 50S ribosomal subunit. The polypeptide is Ribosomal RNA large subunit methyltransferase E (Aeromonas salmonicida (strain A449)).